Consider the following 79-residue polypeptide: Putative membrane protein insertion efficiency factor (79 aa).

This sequence belongs to the UPF0161 family.

It is found in the cell inner membrane. Could be involved in insertion of integral membrane proteins into the membrane. The polypeptide is Putative membrane protein insertion efficiency factor (Rippkaea orientalis (strain PCC 8801 / RF-1) (Cyanothece sp. (strain PCC 8801))).